Consider the following 374-residue polypeptide: Succinyl-diaminopimelate desuccinylase (374 aa).

His66 lines the Zn(2+) pocket. The active site involves Asp68. Asp99 serves as a coordination point for Zn(2+). Glu133 functions as the Proton acceptor in the catalytic mechanism. Residues Glu134, Glu162, and His348 each coordinate Zn(2+).

Belongs to the peptidase M20A family. DapE subfamily. Homodimer. Zn(2+) serves as cofactor. The cofactor is Co(2+).

The catalysed reaction is N-succinyl-(2S,6S)-2,6-diaminopimelate + H2O = (2S,6S)-2,6-diaminopimelate + succinate. It participates in amino-acid biosynthesis; L-lysine biosynthesis via DAP pathway; LL-2,6-diaminopimelate from (S)-tetrahydrodipicolinate (succinylase route): step 3/3. In terms of biological role, catalyzes the hydrolysis of N-succinyl-L,L-diaminopimelic acid (SDAP), forming succinate and LL-2,6-diaminopimelate (DAP), an intermediate involved in the bacterial biosynthesis of lysine and meso-diaminopimelic acid, an essential component of bacterial cell walls. In Coxiella burnetii (strain CbuK_Q154) (Coxiella burnetii (strain Q154)), this protein is Succinyl-diaminopimelate desuccinylase.